The primary structure comprises 520 residues: Pantetheine hydrolase VNN2 (520 aa).

A signal peptide spans 1–22 (MVTSSFPISVAVFALITLQVGT). Residues 31-306 (YEHAVILPNK…GKLLLSEVDS (276 aa)) enclose the CN hydrolase domain. An N-linked (GlcNAc...) asparagine glycan is attached at Asn-39. Glu-80 (proton acceptor) is an active-site residue. Residue Lys-179 is the Proton donor of the active site. The active-site Nucleophile is the Cys-211. 5 N-linked (GlcNAc...) asparagine glycosylation sites follow: Asn-273, Asn-347, Asn-357, Asn-411, and Asn-468. Cys-493 carries GPI-anchor amidated cysteine lipidation. Positions 494–520 (GTSNSAITYLLIFILLMIIALQNIVML) are cleaved as a propeptide — removed in mature form.

Belongs to the carbon-nitrogen hydrolase superfamily. BTD/VNN family. In terms of tissue distribution, widely expressed with higher expression in spleen and blood.

It localises to the cell membrane. It carries out the reaction (R)-pantetheine + H2O = cysteamine + (R)-pantothenate. Amidohydrolase that hydrolyzes specifically one of the carboamide linkages in D-pantetheine thus recycling pantothenic acid (vitamin B5) and releasing cysteamine. Involved in the thymus homing of bone marrow cells. May regulate beta-2 integrin-mediated cell adhesion, migration and motility of neutrophil. In Homo sapiens (Human), this protein is Pantetheine hydrolase VNN2.